The following is a 454-amino-acid chain: Cobyrinate a,c-diamide synthase (454 aa).

The 197-residue stretch at 244-440 folds into the GATase cobBQ-type domain; it reads RLGIAKDKAF…LHVHFYQNPK (197 aa). Cysteine 326 acts as the Nucleophile in catalysis.

Belongs to the CobB/CbiA family. Mg(2+) is required as a cofactor.

The catalysed reaction is cob(II)yrinate + 2 L-glutamine + 2 ATP + 2 H2O = cob(II)yrinate a,c diamide + 2 L-glutamate + 2 ADP + 2 phosphate + 2 H(+). It participates in cofactor biosynthesis; adenosylcobalamin biosynthesis; cob(II)yrinate a,c-diamide from sirohydrochlorin (anaerobic route): step 10/10. Its function is as follows. Catalyzes the ATP-dependent amidation of the two carboxylate groups at positions a and c of cobyrinate, using either L-glutamine or ammonia as the nitrogen source. The polypeptide is Cobyrinate a,c-diamide synthase (Limosilactobacillus reuteri subsp. reuteri (strain JCM 1112) (Lactobacillus reuteri)).